A 61-amino-acid chain; its full sequence is Small ribosomal subunit protein bS21 (61 aa).

The disordered stretch occupies residues 36 to 61; the sequence is EHYESPSVKRKKKAEAARKRKYKYGR. Residues 43–61 are compositionally biased toward basic residues; sequence VKRKKKAEAARKRKYKYGR.

The protein belongs to the bacterial ribosomal protein bS21 family.

This Caldanaerobacter subterraneus subsp. tengcongensis (strain DSM 15242 / JCM 11007 / NBRC 100824 / MB4) (Thermoanaerobacter tengcongensis) protein is Small ribosomal subunit protein bS21 (rpsU).